The chain runs to 167 residues: SAR-endolysin (167 aa).

The helical; Signal-anchor for type II membrane protein transmembrane segment at 11–31 (VIAAISGGAIAIASVLITGPG) threads the bilayer. Catalysis depends on proton donor/acceptor residues Glu37 and Asp46.

The protein belongs to the glycosyl hydrolase 24 family.

The protein resides in the host cell inner membrane. The catalysed reaction is Hydrolysis of (1-&gt;4)-beta-linkages between N-acetylmuramic acid and N-acetyl-D-glucosamine residues in a peptidoglycan and between N-acetyl-D-glucosamine residues in chitodextrins.. In terms of biological role, signal-arrest-release (SAR) endolysin with lysozyme activity that degrades host peptidoglycans and participates with the pinholin and spanin proteins in the sequential events which lead to programmed host cell lysis releasing the mature viral particles. Once the pinholin has permeabilized the host cell membrane, the SAR-endolysin is released into the periplasm where it breaks down the peptidoglycan layer. This chain is SAR-endolysin (19), found in Bacteriophage PS34.